The primary structure comprises 64 residues: Large ribosomal subunit protein bL35 (64 aa).

The interval 1-25 is disordered; it reads MPKLKTHSGAAKRFKKTATGKVKRS.

This sequence belongs to the bacterial ribosomal protein bL35 family.

The sequence is that of Large ribosomal subunit protein bL35 from Koribacter versatilis (strain Ellin345).